We begin with the raw amino-acid sequence, 568 residues long: Serine/threonine-protein kinase RIO1 (568 aa).

2 disordered regions span residues 14 to 70 (GQFD…DDDW) and 83 to 109 (YVWN…STPA). Residues Ser21 and Ser22 each carry the phosphoserine modification. A compositionally biased stretch (basic and acidic residues) spans 24–38 (SENRDLKTVKEKDDI). Residues 51-70 (GEGEIEDEEEEGYDDDDDDW) show a composition bias toward acidic residues. Residues 87 to 105 (GGSNPQANRQTSDSSSAKM) are compositionally biased toward polar residues. One can recognise a Protein kinase domain in the interval 180–479 (TEINGCISTG…TGLKKDLSGV (300 aa)). ATP is bound by residues Lys208, Ser278, and Ile280. Residue Asp324 is the Proton acceptor of the active site. 2 residues coordinate Mg(2+): Asn329 and Asp341. Catalysis depends on Asp341, which acts as the 4-aspartylphosphate intermediate. The tract at residues 490 to 568 (VEERTCSDSE…EKTAKTKKGK (79 aa)) is disordered. The span at 497 to 513 (DSEDIGSSECSDTDSEE) shows a compositional bias: acidic residues. A compositionally biased stretch (basic and acidic residues) spans 514–543 (QGDHARPKKHTTDPDIDKKERKKMVKEAQR). The segment covering 544 to 568 (EKRKNKIPKHVKKRKEKTAKTKKGK) has biased composition (basic residues).

Belongs to the protein kinase superfamily. RIO-type Ser/Thr kinase family. Associates with the precursor of the 40S ribosome subunit. Interacts (via its N-terminus) with PRMT5 (via its N-terminus). Interacts with WDR77. Found in a PRMT5 complex composed of PRMT5, WDR77 and RIOK1. Interacts (via its C-terminus) with NCL; this interaction targets NCL for PRTM5 methylation. Mg(2+) serves as cofactor.

The protein localises to the cytoplasm. It is found in the cytosol. It carries out the reaction L-seryl-[protein] + ATP = O-phospho-L-seryl-[protein] + ADP + H(+). The enzyme catalyses L-threonyl-[protein] + ATP = O-phospho-L-threonyl-[protein] + ADP + H(+). The catalysed reaction is ATP + H2O = ADP + phosphate + H(+). In terms of biological role, involved in the final steps of cytoplasmic maturation of the 40S ribosomal subunit. Involved in processing of 18S-E pre-rRNA to the mature 18S rRNA. Required for the recycling of NOB1 and PNO1 from the late 40S precursor. The association with the very late 40S subunit intermediate may involve a translation-like checkpoint point cycle preceeding the binding to the 60S ribosomal subunit. Despite the protein kinase domain is proposed to act predominantly as an ATPase. The catalytic activity regulates its dynamic association with the 40S subunit. In addition to its role in ribosomal biogenesis acts as an adapter protein by recruiting NCL/nucleolin the to PRMT5 complex for its symmetrical methylation. This Homo sapiens (Human) protein is Serine/threonine-protein kinase RIO1.